Consider the following 594-residue polypeptide: UvrABC system protein C (594 aa).

The GIY-YIG domain occupies 14–91; the sequence is DKPGCYLMKD…IKKHDPKYNV (78 aa). One can recognise a UVR domain in the interval 196–231; sequence SDIKEQLRERMEKAAEDLDFERAKELRDTIAQMEKV.

Belongs to the UvrC family. Interacts with UvrB in an incision complex.

The protein localises to the cytoplasm. The UvrABC repair system catalyzes the recognition and processing of DNA lesions. UvrC both incises the 5' and 3' sides of the lesion. The N-terminal half is responsible for the 3' incision and the C-terminal half is responsible for the 5' incision. This chain is UvrABC system protein C, found in Shouchella clausii (strain KSM-K16) (Alkalihalobacillus clausii).